We begin with the raw amino-acid sequence, 386 residues long: Bifunctional enzyme IspD/IspF (386 aa).

The segment at 1–230 (MIRDERVAAI…RARSILEAPV (230 aa)) is 2-C-methyl-D-erythritol 4-phosphate cytidylyltransferase. A 2-C-methyl-D-erythritol 2,4-cyclodiphosphate synthase region spans residues 231–386 (AMGVGYDTHR…HAVALLVRVR (156 aa)). Residues D237 and H239 each coordinate a divalent metal cation. Residues 237–239 (DTH) and 262–263 (HS) contribute to the 4-CDP-2-C-methyl-D-erythritol 2-phosphate site. H270 serves as a coordination point for a divalent metal cation. 4-CDP-2-C-methyl-D-erythritol 2-phosphate-binding positions include 284–286 (DLG), 289–293 (FPDTD), 360–363 (TTGE), F367, and R370.

The protein in the N-terminal section; belongs to the IspD/TarI cytidylyltransferase family. IspD subfamily. In the C-terminal section; belongs to the IspF family. A divalent metal cation is required as a cofactor.

It catalyses the reaction 2-C-methyl-D-erythritol 4-phosphate + CTP + H(+) = 4-CDP-2-C-methyl-D-erythritol + diphosphate. The catalysed reaction is 4-CDP-2-C-methyl-D-erythritol 2-phosphate = 2-C-methyl-D-erythritol 2,4-cyclic diphosphate + CMP. It functions in the pathway isoprenoid biosynthesis; isopentenyl diphosphate biosynthesis via DXP pathway; isopentenyl diphosphate from 1-deoxy-D-xylulose 5-phosphate: step 2/6. Its pathway is isoprenoid biosynthesis; isopentenyl diphosphate biosynthesis via DXP pathway; isopentenyl diphosphate from 1-deoxy-D-xylulose 5-phosphate: step 4/6. Bifunctional enzyme that catalyzes the formation of 4-diphosphocytidyl-2-C-methyl-D-erythritol from CTP and 2-C-methyl-D-erythritol 4-phosphate (MEP) (IspD), and catalyzes the conversion of 4-diphosphocytidyl-2-C-methyl-D-erythritol 2-phosphate (CDP-ME2P) to 2-C-methyl-D-erythritol 2,4-cyclodiphosphate (ME-CPP) with a corresponding release of cytidine 5-monophosphate (CMP) (IspF). This chain is Bifunctional enzyme IspD/IspF, found in Anaeromyxobacter sp. (strain Fw109-5).